The primary structure comprises 380 residues: Phosphate acyltransferase (380 aa).

The segment at 1–23 (MPSPPPTPETATASDRTATPAPG) is disordered.

Belongs to the PlsX family. In terms of assembly, homodimer. Probably interacts with PlsY.

The protein localises to the cytoplasm. It catalyses the reaction a fatty acyl-[ACP] + phosphate = an acyl phosphate + holo-[ACP]. It functions in the pathway lipid metabolism; phospholipid metabolism. Catalyzes the reversible formation of acyl-phosphate (acyl-PO(4)) from acyl-[acyl-carrier-protein] (acyl-ACP). This enzyme utilizes acyl-ACP as fatty acyl donor, but not acyl-CoA. The protein is Phosphate acyltransferase of Acidiphilium cryptum (strain JF-5).